The chain runs to 317 residues: Ferrochelatase (317 aa).

2 residues coordinate Fe cation: histidine 184 and glutamate 259.

Belongs to the ferrochelatase family.

The protein localises to the cytoplasm. It carries out the reaction heme b + 2 H(+) = protoporphyrin IX + Fe(2+). Its pathway is porphyrin-containing compound metabolism; protoheme biosynthesis; protoheme from protoporphyrin-IX: step 1/1. In terms of biological role, catalyzes the ferrous insertion into protoporphyrin IX. The chain is Ferrochelatase from Chlamydia muridarum (strain MoPn / Nigg).